The chain runs to 189 residues: Heme-binding protein 1 (189 aa).

This sequence belongs to the HEBP family. As to quaternary structure, monomer.

It localises to the cytoplasm. May bind free porphyrinogens that may be present in the cell and thus facilitate removal of these potentially toxic compound. Binds with a high affinity to one molecule of heme or porphyrins. It binds metalloporphyrins, free porphyrins and N-methylprotoporphyrin with similar affinities. The chain is Heme-binding protein 1 (HEBP1) from Sus scrofa (Pig).